The following is a 400-amino-acid chain: S-adenosylmethionine synthase (400 aa).

136-141 (GTGSTD) provides a ligand contact to ATP.

It belongs to the AdoMet synthase 2 family. Mg(2+) serves as cofactor.

The catalysed reaction is L-methionine + ATP + H2O = S-adenosyl-L-methionine + phosphate + diphosphate. The protein operates within amino-acid biosynthesis; S-adenosyl-L-methionine biosynthesis; S-adenosyl-L-methionine from L-methionine: step 1/1. Its function is as follows. Catalyzes the formation of S-adenosylmethionine from methionine and ATP. This is S-adenosylmethionine synthase from Methanoregula boonei (strain DSM 21154 / JCM 14090 / 6A8).